A 246-amino-acid chain; its full sequence is Pyridoxine 5'-phosphate synthase (246 aa).

Position 12 (N12) interacts with 3-amino-2-oxopropyl phosphate. 14–15 is a binding site for 1-deoxy-D-xylulose 5-phosphate; the sequence is DH. Residue R23 coordinates 3-amino-2-oxopropyl phosphate. The active-site Proton acceptor is H48. 2 residues coordinate 1-deoxy-D-xylulose 5-phosphate: R50 and H55. E75 functions as the Proton acceptor in the catalytic mechanism. Residue T105 participates in 1-deoxy-D-xylulose 5-phosphate binding. H196 acts as the Proton donor in catalysis. 3-amino-2-oxopropyl phosphate-binding positions include G197 and 218–219; that span reads GH.

It belongs to the PNP synthase family. In terms of assembly, homooctamer; tetramer of dimers.

The protein resides in the cytoplasm. It catalyses the reaction 3-amino-2-oxopropyl phosphate + 1-deoxy-D-xylulose 5-phosphate = pyridoxine 5'-phosphate + phosphate + 2 H2O + H(+). The protein operates within cofactor biosynthesis; pyridoxine 5'-phosphate biosynthesis; pyridoxine 5'-phosphate from D-erythrose 4-phosphate: step 5/5. Its function is as follows. Catalyzes the complicated ring closure reaction between the two acyclic compounds 1-deoxy-D-xylulose-5-phosphate (DXP) and 3-amino-2-oxopropyl phosphate (1-amino-acetone-3-phosphate or AAP) to form pyridoxine 5'-phosphate (PNP) and inorganic phosphate. The polypeptide is Pyridoxine 5'-phosphate synthase (Pseudomonas syringae pv. tomato (strain ATCC BAA-871 / DC3000)).